The primary structure comprises 382 residues: Lysophosphatidylserine lipase ABHD12 (382 aa).

The segment covering 1–12 (MRKRKGSADHDS) has biased composition (basic and acidic residues). The disordered stretch occupies residues 1–45 (MRKRKGSADHDSSFTATLTDGSSDLKQCHKGTDADTDPGGSGKEM). Over 1–60 (MRKRKGSADHDSSFTATLTDGSSDLKQCHKGTDADTDPGGSGKEMGRRCRRGGLMWRLRR) the chain is Cytoplasmic. Positions 13–25 (SFTATLTDGSSDL) are enriched in polar residues. Residues 61–81 (ILIWLLGIYIAIPVIIKVCPS) form a helical membrane-spanning segment. Topologically, residues 82–382 (IQAKLVFLNF…DFLRAPHPHG (301 aa)) are extracellular. N-linked (GlcNAc...) asparagine glycosylation occurs at N109. Residue S232 is the Nucleophile of the active site. Active-site charge relay system residues include D319 and H358.

The protein belongs to the serine esterase family. As to expression, ubiquitously expressed in adult tissues.

It localises to the endoplasmic reticulum membrane. The catalysed reaction is 1-(9Z-octadecenoyl)-sn-glycero-3-phospho-L-serine + H2O = sn-glycero-3-phospho-L-serine + (9Z)-octadecenoate + H(+). It catalyses the reaction 1-(9Z-octadecenoyl)-sn-glycero-3-phospho-(1'-sn-glycerol) + H2O = sn-glycero-3-phospho-(1'-sn-glycerol) + (9Z)-octadecenoate + H(+). It carries out the reaction 1-(9Z-octadecenoyl)-sn-glycero-3-phospho-(1D-myo-inositol) + H2O = sn-glycero-3-phospho-1D-myo-inositol + (9Z)-octadecenoate + H(+). The enzyme catalyses 1-(9Z-octadecenoyl)-sn-glycero-3-phosphoethanolamine + H2O = sn-glycero-3-phosphoethanolamine + (9Z)-octadecenoate + H(+). The catalysed reaction is 1-(9Z-octadecenoyl)-sn-glycero-3-phosphocholine + H2O = 1-(9Z-octadecenoyl)-sn-glycerol + phosphocholine + H(+). It catalyses the reaction 2-(9Z-octadecenoyl)-glycerol + H2O = glycerol + (9Z)-octadecenoate + H(+). It carries out the reaction 1-hexadecanoyl-sn-glycero-3-phospho-L-serine + H2O = sn-glycero-3-phospho-L-serine + hexadecanoate + H(+). The enzyme catalyses 2-(5Z,8Z,11Z,14Z-eicosatetraenoyl)-glycerol + H2O = glycerol + (5Z,8Z,11Z,14Z)-eicosatetraenoate + H(+). The catalysed reaction is Hydrolyzes glycerol monoesters of long-chain fatty acids.. It catalyses the reaction 1-decanoylglycerol + H2O = decanoate + glycerol + H(+). It carries out the reaction 1-dodecanoylglycerol + H2O = dodecanoate + glycerol + H(+). The enzyme catalyses 1-tetradecanoylglycerol + H2O = tetradecanoate + glycerol + H(+). The catalysed reaction is 2-hexadecanoylglycerol + H2O = glycerol + hexadecanoate + H(+). It catalyses the reaction 1-(9Z-octadecenoyl)-glycerol + H2O = glycerol + (9Z)-octadecenoate + H(+). It carries out the reaction 2-(9Z,12Z-octadecadienoyl)-glycerol + H2O = (9Z,12Z)-octadecadienoate + glycerol + H(+). The enzyme catalyses 1-(5Z,8Z,11Z,14Z-eicosatetraenoyl)-glycerol + H2O = glycerol + (5Z,8Z,11Z,14Z)-eicosatetraenoate + H(+). The catalysed reaction is 1-(9Z,12Z-octadecadienoyl)-glycerol + H2O = (9Z,12Z)-octadecadienoate + glycerol + H(+). It catalyses the reaction 1-hexadecanoylglycerol + H2O = glycerol + hexadecanoate + H(+). It carries out the reaction 1-octadecanoylglycerol + H2O = octadecanoate + glycerol + H(+). The enzyme catalyses 1-octadecanoyl-2-(9,10-epoxyoctadecanoyl)-sn-glycero-3-phospho-L-serine + H2O = 9,10-epoxyoctadecanoate + 1-octadecanoyl-sn-glycero-3-phosphoserine + H(+). The catalysed reaction is 1-octadecanoyl-2-(10-hydroxyoctadecanoyl)-sn-glycero-3-phospho-L-serine + H2O = 1-octadecanoyl-sn-glycero-3-phosphoserine + 10-hydroxyoctadecanoate + H(+). It catalyses the reaction 1-hexadecanoyl-2-(10-hydroxyoctadecanoyl)-sn-glycero-3-phospho-L-serine + H2O = 10-hydroxyoctadecanoate + 1-hexadecanoyl-sn-glycero-3-phospho-L-serine + H(+). Lysophosphatidylserine (LPS) lipase that mediates the hydrolysis of lysophosphatidylserine, a class of signaling lipids that regulates immunological and neurological processes. Represents a major lysophosphatidylserine lipase in the brain, thereby playing a key role in the central nervous system. Also able to hydrolyze oxidized phosphatidylserine; oxidized phosphatidylserine is produced in response to severe inflammatory stress and constitutes a proapoptotic 'eat me' signal. Also has monoacylglycerol (MAG) lipase activity: hydrolyzes 2-arachidonoylglycerol (2-AG), thereby acting as a regulator of endocannabinoid signaling pathways. Has a strong preference for very-long-chain lipid substrates; substrate specificity is likely due to improved catalysis and not improved substrate binding. The protein is Lysophosphatidylserine lipase ABHD12 of Danio rerio (Zebrafish).